Reading from the N-terminus, the 553-residue chain is Threonylcarbamoyladenosine tRNA methylthiotransferase (553 aa).

A disordered region spans residues 21–61 (SAEDVKPQERYQNKKSVTVRAKKRVQIKPETDAEEKPTPRP). Composition is skewed to basic and acidic residues over residues 23-32 (EDVKPQERYQ) and 47-58 (IKPETDAEEKPT). An MTTase N-terminal domain is found at 72 to 179 (QKVFVKTWGC…VVEVVEETLK (108 aa)). [4Fe-4S] cluster-binding residues include Cys81, Cys116, Cys145, Cys221, Cys225, and Cys228. Positions 207-438 (RKNPLIEIIS…DLFYSYEPYA (232 aa)) constitute a Radical SAM core domain. A TRAM domain is found at 438–500 (AQRVGEMYTV…KFSMVGEILD (63 aa)). A helical transmembrane segment spans residues 533-553 (VGIALVVGSLAFLLQLLIRFL).

This sequence belongs to the methylthiotransferase family. CDKAL1 subfamily. The cofactor is [4Fe-4S] cluster.

The protein resides in the membrane. The enzyme catalyses N(6)-L-threonylcarbamoyladenosine(37) in tRNA + (sulfur carrier)-SH + AH2 + 2 S-adenosyl-L-methionine = 2-methylsulfanyl-N(6)-L-threonylcarbamoyladenosine(37) in tRNA + (sulfur carrier)-H + 5'-deoxyadenosine + L-methionine + A + S-adenosyl-L-homocysteine + 2 H(+). In terms of biological role, catalyzes the methylthiolation of N6-threonylcarbamoyladenosine (t(6)A), leading to the formation of 2-methylthio-N6-threonylcarbamoyladenosine (ms(2)t(6)A) at position 37 in tRNAs that read codons beginning with adenine. In Drosophila pseudoobscura pseudoobscura (Fruit fly), this protein is Threonylcarbamoyladenosine tRNA methylthiotransferase.